A 449-amino-acid polypeptide reads, in one-letter code: C4-dicarboxylate transport protein (449 aa).

Residues 1–20 (MSALTESFGPVPSAKSKPPA) are disordered. The segment covering 10-20 (PVPSAKSKPPA) has biased composition (low complexity). 8 helical membrane passes run 28–48 (LLYL…WLSP), 66–86 (LIKM…IAHI), 101–121 (LYFE…GNVV), 167–187 (GDIL…MTLG), 205–225 (FGVI…AMAF), 241–261 (LIAV…GLIA), 326–346 (IYMT…LTWT), and 370–390 (FITL…GMAI).

This sequence belongs to the dicarboxylate/amino acid:cation symporter (DAACS) (TC 2.A.23) family.

Its subcellular location is the cell inner membrane. Functionally, responsible for the transport of dicarboxylates such as succinate, fumarate, and malate from the periplasm across the membrane. In Rhodopseudomonas palustris (strain BisB18), this protein is C4-dicarboxylate transport protein.